The chain runs to 763 residues: Nibrin (763 aa).

The FHA domain maps to 22 to 81 (YVVGRKNCAILIPEDQSISRCHATLSVSHPSANLGQTNAASVLSIKDSSKYGTTVNGDKM). BRCT domains are found at residues 102 to 179 (SKYR…CELL) and 215 to 324 (KRKS…NPRR). Disordered stretches follow at residues 389-496 (VKET…SSQT), 535-593 (SKAA…SEIE), and 738-763 (QTQQ…KRRR). Positions 423 to 433 (LFREDETDTRK) are enriched in basic and acidic residues. Over residues 434–443 (NTPSLLPTKS) the composition is skewed to polar residues. The Nuclear localization signal motif lies at 469–474 (AKKRDR). The segment covering 473 to 482 (DRAEDEKEAS) has biased composition (basic and acidic residues). The segment covering 742-752 (VREESLAEDLF) has biased composition (basic and acidic residues). The FxF/Y motif signature appears at 748 to 757 (AEDLFRYNPK).

Belongs to the Nibrin family. As to quaternary structure, component of the MRN complex composed of two heterodimers rad50 and mre11 associated with a single nbn.

Its subcellular location is the nucleus. The protein resides in the chromosome. It localises to the PML body. The protein localises to the telomere. Its function is as follows. Component of the MRN complex, which plays a central role in double-strand break (DSB) repair, DNA recombination, maintenance of telomere integrity and meiosis. The MRN complex is involved in the repair of DNA double-strand breaks (DSBs) via homologous recombination (HR), an error-free mechanism which primarily occurs during S and G2 phases. The complex (1) mediates the end resection of damaged DNA, which generates proper single-stranded DNA, a key initial steps in HR, and is (2) required for the recruitment of other repair factors and efficient activation of ATM and ATR upon DNA damage. The MRN complex possesses single-strand endonuclease activity and double-strand-specific 3'-5' exonuclease activity, which are provided by MRE11, to initiate end resection, which is required for single-strand invasion and recombination. Within the MRN complex, nbn acts as a protein-protein adapter, which specifically recognizes and binds phosphorylated proteins, promoting their recruitment to DNA damage sites. Recruits mre11 and rad50 components of the MRN complex to DSBs in response to DNA damage. Promotes the recruitment of PI3/PI4-kinase family members atm, atr, and probably DNA-PKcs to the DNA damage sites, activating their functions. Mediates the recruitment of phosphorylated rbbp8/CtIP to DSBs, leading to cooperation between the MRN complex and rbbp8/CtIP to initiate end resection. The MRN complex promotes recruitment of topbp1 to DNA damage sites. The MRN complex and rbbp8/CtIP are also required for chromosome alignment during metaphase. The sequence is that of Nibrin from Xenopus laevis (African clawed frog).